The primary structure comprises 197 residues: MEYSSKLRFAVSCSSNMNRSMEAHGILKKRGFNIESYGSGNQVKMPGPTVDKPNCYEFGPTTYEDIYADLTNKDLHLYTQNGLLHMVDRNRRIKSRPQRFQAETREFDIVLCLEERVFDQVVDFLNRSVGKSGNPVHVINIDIEDNAEEATFGAFFVADLCEKLERSEDFEEDIDQIITDLEENNPKRNLLHTICFY.

Position 39 is a phosphoserine (Ser-39).

The protein belongs to the SSU72 phosphatase family. As to quaternary structure, may interact with synd-1 (via C-terminus); the interaction may prevent ssup-72 binding to RNA polymerase II ama-1. May interact with RNA polymerase II ama-1. May be phosphorylated by kin-20. Expressed in epidermis, intestine and nervous system.

The protein localises to the nucleus. The catalysed reaction is O-phospho-L-seryl-[protein] + H2O = L-seryl-[protein] + phosphate. It carries out the reaction O-phospho-L-threonyl-[protein] + H2O = L-threonyl-[protein] + phosphate. Functionally, protein phosphatase that dephosphorylates 'Ser-5' of the heptad repeats YSPTSPS in the C-terminal domain of the large RNA polymerase II subunit ama-1. By regulating the phosphorylation status of ama-1 and thus ama-1 binding to specific polyadenylation sites, regulates alternative polyadenylation of pre-mRNAs, including unc-44 and dlk-1 mRNAs. This results in the tissue-specific expression of unc-44 isoforms. In Caenorhabditis elegans, this protein is RNA polymerase II subunit A C-terminal domain phosphatase ssup-72.